We begin with the raw amino-acid sequence, 279 residues long: Probable endonuclease 4 (279 aa).

Zn(2+)-binding residues include His69, His109, Glu145, Asp179, His182, His216, Asp229, His231, and Glu261.

It belongs to the AP endonuclease 2 family. The cofactor is Zn(2+).

It carries out the reaction Endonucleolytic cleavage to 5'-phosphooligonucleotide end-products.. Functionally, endonuclease IV plays a role in DNA repair. It cleaves phosphodiester bonds at apurinic or apyrimidinic (AP) sites, generating a 3'-hydroxyl group and a 5'-terminal sugar phosphate. This Chlorobium phaeovibrioides (strain DSM 265 / 1930) (Prosthecochloris vibrioformis (strain DSM 265)) protein is Probable endonuclease 4.